The following is a 299-amino-acid chain: Oxygen-dependent coproporphyrinogen-III oxidase (299 aa).

S92 contacts substrate. Positions 96 and 106 each coordinate a divalent metal cation. H106 functions as the Proton donor in the catalytic mechanism. N108–R110 is a substrate binding site. Positions 145 and 175 each coordinate a divalent metal cation. The segment at Y240–E275 is important for dimerization. Position 258 to 260 (G258 to R260) interacts with substrate.

Belongs to the aerobic coproporphyrinogen-III oxidase family. In terms of assembly, homodimer. A divalent metal cation serves as cofactor.

It localises to the cytoplasm. It carries out the reaction coproporphyrinogen III + O2 + 2 H(+) = protoporphyrinogen IX + 2 CO2 + 2 H2O. It functions in the pathway porphyrin-containing compound metabolism; protoporphyrin-IX biosynthesis; protoporphyrinogen-IX from coproporphyrinogen-III (O2 route): step 1/1. Functionally, involved in the heme biosynthesis. Catalyzes the aerobic oxidative decarboxylation of propionate groups of rings A and B of coproporphyrinogen-III to yield the vinyl groups in protoporphyrinogen-IX. The chain is Oxygen-dependent coproporphyrinogen-III oxidase from Salmonella dublin (strain CT_02021853).